The following is a 297-amino-acid chain: 3-methyl-2-oxobutanoate hydroxymethyltransferase (297 aa).

Residues 1 to 15 (MSEQISEQSEQNVYG) are compositionally biased toward polar residues. The segment at 1–40 (MSEQISEQSEQNVYGASSPVPAGESSPSAASAPRTKVRTH) is disordered. A compositionally biased stretch (low complexity) spans 16-33 (ASSPVPAGESSPSAASAP). Residues D78 and D117 each coordinate Mg(2+). Residues 78 to 79 (DS), D117, and K147 contribute to the 3-methyl-2-oxobutanoate site. Residue E149 participates in Mg(2+) binding. Catalysis depends on E215, which acts as the Proton acceptor.

It belongs to the PanB family. Homodecamer; pentamer of dimers. The cofactor is Mg(2+).

Its subcellular location is the cytoplasm. The catalysed reaction is 3-methyl-2-oxobutanoate + (6R)-5,10-methylene-5,6,7,8-tetrahydrofolate + H2O = 2-dehydropantoate + (6S)-5,6,7,8-tetrahydrofolate. The protein operates within cofactor biosynthesis; (R)-pantothenate biosynthesis; (R)-pantoate from 3-methyl-2-oxobutanoate: step 1/2. Functionally, catalyzes the reversible reaction in which hydroxymethyl group from 5,10-methylenetetrahydrofolate is transferred onto alpha-ketoisovalerate to form ketopantoate. In Mycobacterium marinum (strain ATCC BAA-535 / M), this protein is 3-methyl-2-oxobutanoate hydroxymethyltransferase.